A 203-amino-acid polypeptide reads, in one-letter code: MKAKLVSLLAQANIKISDQQIQQLIDLVNLLNKWNKAYNLTSVRDPQEMLVKHILDSLVVSPYLQGDRFIDVGTGPGLPGLPLAIINPSKQFVLLDSLGKRISFIRNAIRELRLTNATPVLSRVEEYQPEDKFDGVLSRAFASLKDMTDWCYHLPKENGYFYALKGIYQEDEINELNKKYTIQKVIELSVPELIGERHLIVLR.

S-adenosyl-L-methionine is bound by residues glycine 73, leucine 78, 124–125, and arginine 139; that span reads VE.

This sequence belongs to the methyltransferase superfamily. RNA methyltransferase RsmG family.

The protein localises to the cytoplasm. It catalyses the reaction guanosine(527) in 16S rRNA + S-adenosyl-L-methionine = N(7)-methylguanosine(527) in 16S rRNA + S-adenosyl-L-homocysteine. In terms of biological role, specifically methylates the N7 position of guanine in position 527 of 16S rRNA. This Haemophilus influenzae (strain PittEE) protein is Ribosomal RNA small subunit methyltransferase G.